We begin with the raw amino-acid sequence, 377 residues long: Chaperone protein DnaJ (377 aa).

Residues 4–69 form the J domain; it reads DYYEALGVTR…QKRAAYDRFG (66 aa). A CR-type zinc finger spans residues 135 to 213; that stretch reads GKTAQIRVPT…CHGQGRVTQE (79 aa). Zn(2+) is bound by residues Cys148, Cys151, Cys165, Cys168, Cys187, Cys190, Cys201, and Cys204. 4 CXXCXGXG motif repeats span residues 148–155, 165–172, 187–194, and 201–208; these read CDECSGSG, CTMCSGSG, CPGCNGRG, and CEKCHGQG.

The protein belongs to the DnaJ family. Homodimer. It depends on Zn(2+) as a cofactor.

The protein localises to the cytoplasm. Functionally, participates actively in the response to hyperosmotic and heat shock by preventing the aggregation of stress-denatured proteins and by disaggregating proteins, also in an autonomous, DnaK-independent fashion. Unfolded proteins bind initially to DnaJ; upon interaction with the DnaJ-bound protein, DnaK hydrolyzes its bound ATP, resulting in the formation of a stable complex. GrpE releases ADP from DnaK; ATP binding to DnaK triggers the release of the substrate protein, thus completing the reaction cycle. Several rounds of ATP-dependent interactions between DnaJ, DnaK and GrpE are required for fully efficient folding. Also involved, together with DnaK and GrpE, in the DNA replication of plasmids through activation of initiation proteins. This is Chaperone protein DnaJ from Brucella canis (strain ATCC 23365 / NCTC 10854 / RM-666).